Reading from the N-terminus, the 462-residue chain is Metal cation symporter ZIP8 (462 aa).

The signal sequence occupies residues 1–19 (MAPGRAVAGLLLLAATSLG). The Extracellular segment spans residues 20-132 (HPSEGPELAF…PSLSEVWGYG (113 aa)). N-linked (GlcNAc...) asparagine glycosylation is found at N40, N88, and N96. A helical transmembrane segment spans residues 133 to 153 (FLSVTIINLASLLGLILTPLI). The Cytoplasmic segment spans residues 154–160 (KKSYFPK). Residues 161-181 (ILTYFVGLAIGTLFSNAIFQL) traverse the membrane as a helical segment. Residues 182-191 (IPEAFGFNPK) lie on the Extracellular side of the membrane. A helical membrane pass occupies residues 192–212 (IDNYVEKAVAVFGGFYMLFFV). At 213–367 (ERTLKMLLKT…LNAGMSTRQA (155 aa)) the chain is on the cytoplasmic side. Residues 345–350 (EEFPHE) carry the XEXPHE-motif motif. A helical membrane pass occupies residues 368–388 (LLFNFLSACSCYVGLAFGILV). Residues 389 to 390 (GN) lie on the Extracellular side of the membrane. The chain crosses the membrane as a helical span at residues 391–411 (NFAPNIIFALAGGMFLYISLA). Topologically, residues 412 to 431 (DMFPEMNDMLREKVTGRQTD) are cytoplasmic. The helical transmembrane segment at 432–452 (FTFFMIQNAGMLTGFTAILLI) threads the bilayer. Topologically, residues 453 to 462 (TLYAGDIELQ) are extracellular.

It belongs to the ZIP transporter (TC 2.A.5) family. As to quaternary structure, homodimer. In terms of processing, N-glycosylated. N-glycosylation is not required for proper iron and zinc transport. In terms of tissue distribution, ubiquitously expressed.

It localises to the cell membrane. It is found in the apical cell membrane. Its subcellular location is the basolateral cell membrane. The protein resides in the lysosome membrane. It carries out the reaction Zn(2+)(out) + 2 hydrogencarbonate(out) = Zn(2+)(in) + 2 hydrogencarbonate(in). It catalyses the reaction selenite(out) + Zn(2+)(out) + hydrogencarbonate(out) = selenite(in) + Zn(2+)(in) + hydrogencarbonate(in). The enzyme catalyses Mn(2+)(out) + 2 hydrogencarbonate(out) = Mn(2+)(in) + 2 hydrogencarbonate(in). The catalysed reaction is Cd(2+)(out) + 2 hydrogencarbonate(out) = Cd(2+)(in) + 2 hydrogencarbonate(in). It carries out the reaction Fe(2+)(out) + 2 hydrogencarbonate(out) = Fe(2+)(in) + 2 hydrogencarbonate(in). It catalyses the reaction Co(2+)(out) + 2 hydrogencarbonate(out) = Co(2+)(in) + 2 hydrogencarbonate(in). Electroneutral divalent metal cation:bicarbonate symporter of the plasma membrane mediating the cellular uptake of zinc and manganese, two divalent metal cations important for development, tissue homeostasis and immunity. Transports an electroneutral complex composed of a divalent metal cation and two bicarbonate anions or alternatively a bicarbonate and a selenite anion. Thereby, it also contributes to the cellular uptake of selenium, an essential trace metal and micronutrient. Also imports cadmium a non-essential metal which is cytotoxic and carcinogenic. May also transport iron and cobalt through membranes. Through zinc import, indirectly regulates the metal-dependent transcription factor MTF1 and the expression of some metalloproteases involved in cartilage catabolism and also probably heart development. Also indirectly regulates the expression of proteins involved in cell morphology and cytoskeleton organization. Indirectly controls innate immune function and inflammatory response by regulating zinc cellular uptake which in turn modulates the expression of genes specific of these processes. Protects, for instance, cells from injury and death at the onset of inflammation. By regulating zinc influx into monocytes also directly modulates their adhesion to endothelial cells and arteries. Reclaims manganese from the bile at the apical membrane of hepatocytes, thereby regulating the activity of the manganese-dependent enzymes through the systemic levels of the nutrient. Also participates in manganese reabsorption in the proximal tubule of the kidney. By mediating the extracellular uptake of manganese by cells of the blood-brain barrier, may also play a role in the transport of the micronutrient to the brain. With manganese cellular uptake also participates in mitochondrial proper function. Finally, also probably functions intracellularly, translocating zinc from lysosome to cytosol to indirectly enhance the expression of specific genes during TCR-mediated T cell activation. In Mus musculus (Mouse), this protein is Metal cation symporter ZIP8.